We begin with the raw amino-acid sequence, 366 residues long: MTDAPLILLAAGGTGGHLFPAEALGVVLIRRGYRVRLVTDHRATRYSGLFTAEMTDVVPSETVRGRTPWALAKTALKLGSGALLAFNLIGRLKPAAVVGFGGYPTLPPLLAATWRRVPTLIHEQNAVMGRANRFLAPRVDAIATGFPGHEIAWPVLASKITNTGNPIRPAVADAATVAYDPPAAGGSLRVLVFGGSQGARVMADIVPPALEKLDPALLRRLVLTQQVRDEDMGRVRAVYDRLQLNCELAPFFTDLPQRLASSQLVVSRSGAGTVAELAAIGRPGILVPLPGALDQDQFANAGVLTAAGGALRIVQPDFTPDRLAAEITALAADPAKLTQMAAAARQIGRLDAAERLADVVGRVAKV.

UDP-N-acetyl-alpha-D-glucosamine is bound by residues 14–16 (TGG), N125, R168, S196, and Q297.

It belongs to the glycosyltransferase 28 family. MurG subfamily.

The protein localises to the cell inner membrane. The catalysed reaction is di-trans,octa-cis-undecaprenyl diphospho-N-acetyl-alpha-D-muramoyl-L-alanyl-D-glutamyl-meso-2,6-diaminopimeloyl-D-alanyl-D-alanine + UDP-N-acetyl-alpha-D-glucosamine = di-trans,octa-cis-undecaprenyl diphospho-[N-acetyl-alpha-D-glucosaminyl-(1-&gt;4)]-N-acetyl-alpha-D-muramoyl-L-alanyl-D-glutamyl-meso-2,6-diaminopimeloyl-D-alanyl-D-alanine + UDP + H(+). Its pathway is cell wall biogenesis; peptidoglycan biosynthesis. Functionally, cell wall formation. Catalyzes the transfer of a GlcNAc subunit on undecaprenyl-pyrophosphoryl-MurNAc-pentapeptide (lipid intermediate I) to form undecaprenyl-pyrophosphoryl-MurNAc-(pentapeptide)GlcNAc (lipid intermediate II). This chain is UDP-N-acetylglucosamine--N-acetylmuramyl-(pentapeptide) pyrophosphoryl-undecaprenol N-acetylglucosamine transferase, found in Rhodopseudomonas palustris (strain ATCC BAA-98 / CGA009).